The chain runs to 471 residues: L-lysine 2,3-aminomutase (471 aa).

Residues H120–A332 form the Radical SAM core domain. [4Fe-4S] cluster contacts are provided by C134, C138, and C141. Residue K346 is modified to N6-(pyridoxal phosphate)lysine.

Belongs to the radical SAM superfamily. KamA family. Homotetramer. The cofactor is [4Fe-4S] cluster. It depends on pyridoxal 5'-phosphate as a cofactor.

It carries out the reaction L-lysine = (3S)-3,6-diaminohexanoate. The protein operates within amino-acid degradation; L-lysine degradation via acetate pathway. Functionally, catalyzes the interconversion of L-alpha-lysine and L-beta-lysine. The protein is L-lysine 2,3-aminomutase (kamA) of Bacillus subtilis (strain 168).